A 409-amino-acid chain; its full sequence is Immunity-related GTPase family M protein 1 (409 aa).

The IRG-type G domain occupies 75 to 251; sequence IPVSIFVTGD…PKLRDTLHKD (177 aa). GTP is bound by residues 84–91, 109–113, and 191–193; these read DSGNGMSS, TGVVR, and KLD. Serine 202 is subject to Phosphoserine. A GTP-binding site is contributed by 232–234; the sequence is SSL. Residue lysine 270 forms a Glycyl lysine isopeptide (Lys-Gly) (interchain with G-Cter in ubiquitin) linkage. The segment at 350 to 374 is alpha-K amphipathic helix; that stretch reads KLRLMTCAIVNAFFRLLRFLPCVCC.

The protein belongs to the TRAFAC class dynamin-like GTPase superfamily. IRG family. As to quaternary structure, interacts with ULK1; promoting the coassembly of ULK1 and BECN1. Interacts with BECN1; enhancing BECN1-interacting partners and influencing the composition of the BECN1 complex. Interacts with ATG16L1. Interacts with NOD2; promoting Irgm1 'Lys-63'-linked polyubiquitination, which is required for interactions with the core autophagy factors. Interacts with STX17; promoting STX17 recruitment to autophagosomes. Interacts with ATG8 proteins (GABARAP, GABARAPL1, GABARAPL2, MAP1LC3A, MAP1LC3B and MAP1LC3C); promoting STX17 recruitment to autophagosomes. Interacts with TFEB; promoting association between TFEB and PPP3CB and TFEB dephosphorylation. Interacts with PPP3CB; promoting association between TFEB and PPP3CB and TFEB dephosphorylation. Interacts with NLRP3; preventing NLRP3 inflammasome assembly and promoting SQSTM1/p62-dependent autophagic degradation of NLRP3. Interacts with CGAS; promoting SQSTM1/p62-dependent autophagic degradation of CGAS. Interacts with RIGI/RIG-I; promoting SQSTM1/p62-dependent autophagic degradation of RIGI/RIG-I. Interacts with NOD1; promoting SQSTM1/p62-dependent autophagic degradation of RIGI/RIG-I. Interacts with NOD2; promoting SQSTM1/p62-dependent autophagic degradation of RIGI/RIG-I. Interacts with RIPK2; promoting SQSTM1/p62-dependent autophagic degradation of RIGI/RIG-I. Interacts with PIK3CA. In terms of processing, palmitoylated on C-terminal Cys residues. Palmitoylation, together with the alpha-K amphipathic helix, which binds phosphatidylinositol, mediate binding to membranes. Post-translationally, ubiquitinated via 'Lys-63'-linked polyubiquitination in a NOD2-dependent process. 'Lys-63'-linked polyubiquitination is required for interactions with the core autophagy factors. Ubiquitination at Lys-270 by the DCX(WDR77) complex, also named CLR4(WDR77) complex, in intestinal cells, leading to its degradation by the proteasome. In terms of tissue distribution, expressed in lung and primary macrophages.

It is found in the golgi apparatus membrane. The protein localises to the cell membrane. Its subcellular location is the cytoplasmic vesicle. The protein resides in the phagosome membrane. It localises to the autophagosome membrane. It is found in the lysosome membrane. The protein localises to the late endosome membrane. Its subcellular location is the mitochondrion membrane. The protein resides in the lipid droplet. It localises to the cell projection. It is found in the phagocytic cup. The catalysed reaction is GTP + H2O = GDP + phosphate + H(+). Its function is as follows. Immunity-related GTPase that plays important roles in innate immunity and inflammatory response. Acts as a dynamin-like protein that binds to intracellular membranes and promotes remodeling and trafficking of those membranes. Required for clearance of acute protozoan and bacterial infections by interacting with autophagy and lysosome regulatory proteins, thereby promoting the fusion of phagosomes with lysosomes for efficient degradation of cargo including microbes. Regulates selective autophagy, including xenophagy and mitophagy, both directly and indirectly. Directly regulates autophagy by acting as a molecular adapter that promotes the coassembly of the core autophagy machinery to mediate antimicrobial defense: Irgm1 (1) activates AMPK, which in turn phosphorylates ULK1 and BECN1 to induce autophagy, (2) promotes the coassembly of ULK1 and BECN1, enhancing BECN1-interacting partners and (3) influences the composition of the BECN1 complex, by competing with the negative regulators BCL2 and RUBCN, to trigger autophagy. Also activates autophagy by promoting recruitment of STX17 to autophagosomes. In collaboration with ATG8 proteins, regulate lysosomal biogenesis, a fundamental process for any autophagic pathway, by promoting TFEB dephosphorylation. Also modulates autophagy by assisting with autophagosome formation and preventing lysosomal deacidification. Regulates autophagy by affecting mitochondrial fusion and fission. Also involved in M1 macrophage activation for the production of proinflammatory cytokines. While activating autophagy, acts as a key negative regulator of the inflammatory and interferon responses both by (1) promoting mitophagy and (2) mediating autophagy-dependent degradation of effectors of the inflammatory response. Promotes degradation of damaged and IFNG/IFN-gamma-stressed mitochondria via mitophagy, preventing cytosolic release of ligands that activate inflammation. Negatively regulates interferon-signaling in hematopoietic stem cells, preserving hematopoietic stem cell number and function. Promotes expansion of activated CD4(+) T-cells by inhibiting IFNG/IFN-gamma signaling, thereby preventing Ifng-mediated cell death of CD4(+) T-cells. Acts as a suppressor of inflammation by promoting recruitment of inflammation effectors, such as CGAS, RIGI/RIG-I and NLRP3, to autophagosome membranes, leading to their SQSTM1/p62-dependent autophagic degradation. Also directly inhibits assembly of the NLRP3 inflammasome by preventing the association between NLRP3 and PYCARD. Acts as a negative regulator of antiviral innate immune response by suppressing the RIPK2-dependent pro-inflammatory response: mediates recruitment of RIPosomes, composed of RIPK2 and NOD1 or NOD2, to autophagosome membranes, promoting their SQSTM1/p62-dependent autophagic degradation. The protein is Immunity-related GTPase family M protein 1 of Mus musculus (Mouse).